The sequence spans 869 residues: AP-3 complex subunit delta (869 aa).

Ser-2 carries the N-acetylserine modification. 7 HEAT repeats span residues Asn-33–Val-70, Ser-107–Asp-142, Leu-143–Asp-179, Ala-180–Gln-216, Cys-218–Arg-254, Ala-292–Trp-329, and Ala-330–Val-366. The interval Ile-738 to Leu-869 is disordered. Polar residues predominate over residues Ile-769–Ala-780. Residues Gln-815–Glu-830 show a composition bias toward basic and acidic residues. The span at Lys-831–Arg-850 shows a compositional bias: basic residues.

This sequence belongs to the adaptor complexes large subunit family. As to quaternary structure, adaptor protein complex 3 (AP-3) is a heterotetramer composed of two large adaptins (delta-type subunit and beta-type subunit), a medium adaptin (mu-type subunit) and a small adaptin (sigma-type subunit). Binds to EPSIN2.

It is found in the cytoplasm. The protein localises to the golgi apparatus membrane. Part of the AP-3 complex, an adaptor-related complex which seems to be clathrin-associated. The complex is associated with the Golgi region as well as more peripheral structures. It facilitates the budding of vesicles from the Golgi membrane and may be directly involved in trafficking to the vacuole. It also function in maintaining the identity of lytic vacuoles and in regulating the transition between storage and lytic vacuoles. The sequence is that of AP-3 complex subunit delta (DELTA-ADR) from Arabidopsis thaliana (Mouse-ear cress).